A 221-amino-acid chain; its full sequence is Chalcone--flavanone isomerase (221 aa).

T47, N112, and S189 together coordinate substrate.

It belongs to the chalcone isomerase family.

It carries out the reaction a chalcone = a flavanone.. It participates in secondary metabolite biosynthesis; flavonoid biosynthesis. Catalyzes the intramolecular cyclization of bicyclic chalcones into tricyclic (S)-flavanones. Responsible for the isomerization of 4,2',4',6'-tetrahydroxychalcone (also termed chalcone) into naringenin. The chain is Chalcone--flavanone isomerase (CHI) from Dianthus caryophyllus (Carnation).